Reading from the N-terminus, the 318-residue chain is Aspartate carbamoyltransferase catalytic subunit (318 aa).

Carbamoyl phosphate is bound by residues R59 and T60. L-aspartate is bound at residue K87. R109, H137, and Q140 together coordinate carbamoyl phosphate. Residues R170 and R224 each coordinate L-aspartate. The carbamoyl phosphate site is built by G265 and P266.

The protein belongs to the aspartate/ornithine carbamoyltransferase superfamily. ATCase family. As to quaternary structure, heterododecamer (2C3:3R2) of six catalytic PyrB chains organized as two trimers (C3), and six regulatory PyrI chains organized as three dimers (R2).

It carries out the reaction carbamoyl phosphate + L-aspartate = N-carbamoyl-L-aspartate + phosphate + H(+). The protein operates within pyrimidine metabolism; UMP biosynthesis via de novo pathway; (S)-dihydroorotate from bicarbonate: step 2/3. Functionally, catalyzes the condensation of carbamoyl phosphate and aspartate to form carbamoyl aspartate and inorganic phosphate, the committed step in the de novo pyrimidine nucleotide biosynthesis pathway. The protein is Aspartate carbamoyltransferase catalytic subunit of Rhizobium rhizogenes (strain K84 / ATCC BAA-868) (Agrobacterium radiobacter).